We begin with the raw amino-acid sequence, 318 residues long: NADH-ubiquinone oxidoreductase chain 1 (318 aa).

Helical transmembrane passes span 2 to 22 (FMLN…FLTL), 68 to 88 (ITMF…MWIP), 100 to 120 (LGVL…LWSG), 147 to 167 (AIIL…TLII), 171 to 191 (YIWL…STLA), 217 to 237 (GGPF…MNAL), 254 to 273 (LYTT…FLWI), and 294 to 314 (LPLT…MAGI).

It belongs to the complex I subunit 1 family.

The protein localises to the mitochondrion inner membrane. It carries out the reaction a ubiquinone + NADH + 5 H(+)(in) = a ubiquinol + NAD(+) + 4 H(+)(out). Functionally, core subunit of the mitochondrial membrane respiratory chain NADH dehydrogenase (Complex I) that is believed to belong to the minimal assembly required for catalysis. Complex I functions in the transfer of electrons from NADH to the respiratory chain. The immediate electron acceptor for the enzyme is believed to be ubiquinone. In Hsunycteris thomasi (Thomas's nectar bat), this protein is NADH-ubiquinone oxidoreductase chain 1 (MT-ND1).